The sequence spans 504 residues: Deoxyguanosinetriphosphate triphosphohydrolase (504 aa).

The HD domain occupies 66 to 273 (RLTHSLEVQQ…MEAADDISYC (208 aa)).

Belongs to the dGTPase family. Type 1 subfamily. As to quaternary structure, homotetramer. Mg(2+) serves as cofactor.

It catalyses the reaction dGTP + H2O = 2'-deoxyguanosine + triphosphate + H(+). Functionally, dGTPase preferentially hydrolyzes dGTP over the other canonical NTPs. In Klebsiella pneumoniae subsp. pneumoniae (strain ATCC 700721 / MGH 78578), this protein is Deoxyguanosinetriphosphate triphosphohydrolase.